The following is a 518-amino-acid chain: Lycopene epsilon cyclase, chloroplastic (518 aa).

100 to 128 (LIVIGCGPAGMSLAAEAGKRGLSVGLIGP) contributes to the NAD(+) binding site. 2 consecutive transmembrane segments (helical) span residues 435 to 455 (FFLFGLALILQLDIDGIRIFF) and 469 to 489 (FLGSTLSSAGLIWFAFYMFAI).

The protein belongs to the lycopene cyclase family. In terms of tissue distribution, expressed in leaves and roots. Detected in flower buds and lips.

It is found in the plastid. Its subcellular location is the chloroplast membrane. It carries out the reaction a carotenoid psi-end group = a carotenoid epsilon-end group. It functions in the pathway carotenoid biosynthesis; alpha-zeacarotene biosynthesis. The protein operates within carotenoid biosynthesis; delta-carotene biosynthesis. Its function is as follows. Catalyzes the single epsilon-cyclization reaction which converts lycopene to delta-carotene and neurosporene to alpha-zeacarotene. Required for lutein biosynthesis. In Oncidium hybrid cultivar (Orchid), this protein is Lycopene epsilon cyclase, chloroplastic.